A 1107-amino-acid polypeptide reads, in one-letter code: Integrator complex subunit 6 homolog (1107 aa).

The VWFA domain occupies 2 to 195 (LITFVVDTSG…LPMEPAIAPM (194 aa)). 5 disordered regions span residues 454–515 (RIIN…SGNL), 542–572 (DNET…SSNI), 629–801 (TLRD…VSSP), 818–861 (QISS…IVNN), and 946–1034 (VVRP…TTPN). Composition is skewed to low complexity over residues 460–513 (QQQQ…SGSG) and 546–562 (SENS…STTG). Over residues 629 to 639 (TLRDIDDDKKP) the composition is skewed to basic and acidic residues. Residues 693–801 (PSLPTLNSLS…PIPSTTVSSP (109 aa)) show a composition bias toward low complexity. Over residues 846–857 (SPPPPPPPPPLP) the composition is skewed to pro residues. A compositionally biased stretch (low complexity) spans 956–975 (PLTIDTLTSSSSSSTIPTTT). Residues 976–996 (NGSLSTHDTPNTSPTLSSINY) are compositionally biased toward polar residues. A compositionally biased stretch (low complexity) spans 997 to 1034 (NNNNNNNNNNNNNNNNNNNNNNNNNNRKNSIITTTTPN). In terms of domain architecture, MIF4G spans 1041 to 1103 (IKFVHKEIRR…SLISKLIGYI (63 aa)).

It belongs to the Integrator subunit 6 family. In terms of assembly, component of the Integrator complex. The core complex associates with protein phosphatase 2A subunits, to form the Integrator-PP2A (INTAC) complex.

It is found in the nucleus. The protein resides in the chromosome. Component of the integrator complex, a multiprotein complex that terminates RNA polymerase II (Pol II) transcription in the promoter-proximal region of genes. The integrator complex provides a quality checkpoint during transcription elongation by driving premature transcription termination of transcripts that are unfavorably configured for transcriptional elongation: the complex terminates transcription by (1) catalyzing dephosphorylation of the C-terminal domain (CTD) of Pol II subunit polr2a, (2) degrading the exiting nascent RNA transcript via endonuclease activity and (3) promoting the release of Pol II from bound DNA. The integrator complex is also involved in terminating the synthesis of non-coding Pol II transcripts, such as enhancer RNAs (eRNAs), small nuclear RNAs (snRNAs), telomerase RNAs and long non-coding RNAs (lncRNAs). Within the integrator complex, INTS6 acts as a molecular adapter that promotes assembly of protein phosphatase 2A (PP2A) subunits to the integrator core complex, promoting recruitment of PP2A to transcription pause-release checkpoint. This is Integrator complex subunit 6 homolog (ints6) from Dictyostelium discoideum (Social amoeba).